The sequence spans 437 residues: Na(+)/H(+) antiporter NhaA (437 aa).

11 helical membrane-spanning segments follow: residues 12–32, 65–85, 103–123, 133–153, 162–182, 186–206, 214–234, 308–328, 333–353, 377–397, and 412–432; these read SMNI…AVIA, LTMI…MVGL, ALPF…YSMV, GLAI…SLLG, IFLT…IAIF, HVAY…YFIG, IFFL…GIHS, GAVN…VMFS, VIGG…FLGI, ISGV…IANL, and LGVL…LHWV.

Belongs to the NhaA Na(+)/H(+) (TC 2.A.33) antiporter family.

The protein resides in the cell inner membrane. The catalysed reaction is Na(+)(in) + 2 H(+)(out) = Na(+)(out) + 2 H(+)(in). Functionally, na(+)/H(+) antiporter that extrudes sodium in exchange for external protons. The sequence is that of Na(+)/H(+) antiporter NhaA from Bacteroides fragilis (strain ATCC 25285 / DSM 2151 / CCUG 4856 / JCM 11019 / LMG 10263 / NCTC 9343 / Onslow / VPI 2553 / EN-2).